A 351-amino-acid polypeptide reads, in one-letter code: tRNA (guanine(26)-N(2))-dimethyltransferase (351 aa).

The Trm1 methyltransferase domain maps to 4 to 350 (VLRREGAVQF…AGYGEVKRAL (347 aa)). S-adenosyl-L-methionine is bound by residues Arg39, Arg65, Asp83, Asp109, and Ala110.

Belongs to the class I-like SAM-binding methyltransferase superfamily. Trm1 family.

The enzyme catalyses guanosine(26) in tRNA + 2 S-adenosyl-L-methionine = N(2)-dimethylguanosine(26) in tRNA + 2 S-adenosyl-L-homocysteine + 2 H(+). Functionally, dimethylates a single guanine residue at position 26 of a number of tRNAs using S-adenosyl-L-methionine as donor of the methyl groups. In Pyrobaculum neutrophilum (strain DSM 2338 / JCM 9278 / NBRC 100436 / V24Sta) (Thermoproteus neutrophilus), this protein is tRNA (guanine(26)-N(2))-dimethyltransferase.